The following is a 369-amino-acid chain: Probable dual-specificity RNA methyltransferase RlmN (369 aa).

Glu108 (proton acceptor) is an active-site residue. The region spanning 114–357 (YPDRATVCIS…CTVRDTRGQE (244 aa)) is the Radical SAM core domain. Residues Cys121 and Cys362 are joined by a disulfide bond. The [4Fe-4S] cluster site is built by Cys128, Cys132, and Cys135. Residues 183-184 (GE), Ser217, 240-242 (SLH), and Asn319 each bind S-adenosyl-L-methionine. The active-site S-methylcysteine intermediate is the Cys362.

The protein belongs to the radical SAM superfamily. RlmN family. [4Fe-4S] cluster is required as a cofactor.

It is found in the cytoplasm. The catalysed reaction is adenosine(2503) in 23S rRNA + 2 reduced [2Fe-2S]-[ferredoxin] + 2 S-adenosyl-L-methionine = 2-methyladenosine(2503) in 23S rRNA + 5'-deoxyadenosine + L-methionine + 2 oxidized [2Fe-2S]-[ferredoxin] + S-adenosyl-L-homocysteine. It catalyses the reaction adenosine(37) in tRNA + 2 reduced [2Fe-2S]-[ferredoxin] + 2 S-adenosyl-L-methionine = 2-methyladenosine(37) in tRNA + 5'-deoxyadenosine + L-methionine + 2 oxidized [2Fe-2S]-[ferredoxin] + S-adenosyl-L-homocysteine. Specifically methylates position 2 of adenine 2503 in 23S rRNA and position 2 of adenine 37 in tRNAs. The chain is Probable dual-specificity RNA methyltransferase RlmN from Saccharopolyspora erythraea (strain ATCC 11635 / DSM 40517 / JCM 4748 / NBRC 13426 / NCIMB 8594 / NRRL 2338).